The following is a 660-amino-acid chain: Methionine--tRNA ligase (660 aa).

The 'HIGH' region motif lies at 11-21; sequence PYANGPCHLGH. Residues cysteine 143, cysteine 146, cysteine 155, and cysteine 158 each contribute to the Zn(2+) site. Residues 325-329 carry the 'KMSKS' region motif; that stretch reads KMSTS. Residue threonine 328 participates in ATP binding. Positions 563–660 constitute a tRNA-binding domain; that stretch reads DFDKVVIKIG…DECEVGERIQ (98 aa).

Belongs to the class-I aminoacyl-tRNA synthetase family. MetG type 1 subfamily. Homodimer. Zn(2+) is required as a cofactor.

The protein localises to the cytoplasm. The enzyme catalyses tRNA(Met) + L-methionine + ATP = L-methionyl-tRNA(Met) + AMP + diphosphate. Its function is as follows. Is required not only for elongation of protein synthesis but also for the initiation of all mRNA translation through initiator tRNA(fMet) aminoacylation. The chain is Methionine--tRNA ligase from Methanobrevibacter smithii (strain ATCC 35061 / DSM 861 / OCM 144 / PS).